The following is a 414-amino-acid chain: Esterase FrsA (414 aa).

This sequence belongs to the FrsA family.

The enzyme catalyses a carboxylic ester + H2O = an alcohol + a carboxylate + H(+). In terms of biological role, catalyzes the hydrolysis of esters. The polypeptide is Esterase FrsA (Shigella dysenteriae serotype 1 (strain Sd197)).